The sequence spans 346 residues: GTP-binding RHO-like protein (346 aa).

Residues 1-10 show a composition bias toward basic residues; that stretch reads MTPNGSRRHS. Positions 1-25 are disordered; the sequence is MTPNGSRRHSAYMGSPRSQHSSTME. The segment covering 16–25 has biased composition (polar residues); it reads PRSQHSSTME. 82–89 is a binding site for GTP; the sequence is GDGGCGKT. Positions 104–112 match the Effector region motif; sequence YVPTVFENY. GTP is bound by residues 130 to 134 and 188 to 191; these read DTAGQ and TKSD. The disordered stretch occupies residues 259 to 294; that stretch reads LGGSNGGSGNHSRHHSRNYSNVSNNRRGHLKNTSYD. Cys343 is modified (cysteine methyl ester). The S-geranylgeranyl cysteine moiety is linked to residue Cys343. A propeptide spans 344–346 (removed in mature form); the sequence is VIL.

It belongs to the small GTPase superfamily. Rho family.

It localises to the cell membrane. The polypeptide is GTP-binding RHO-like protein (CRL1) (Candida albicans (strain WO-1) (Yeast)).